Consider the following 598-residue polypeptide: Elongation factor 4 (598 aa).

The tr-type G domain maps to 3 to 185 (QHIRNFSIIA…MIVARIPPPE (183 aa)). GTP is bound by residues 15–20 (DHGKST) and 132–135 (NKID).

The protein belongs to the TRAFAC class translation factor GTPase superfamily. Classic translation factor GTPase family. LepA subfamily.

It is found in the cell inner membrane. The catalysed reaction is GTP + H2O = GDP + phosphate + H(+). Functionally, required for accurate and efficient protein synthesis under certain stress conditions. May act as a fidelity factor of the translation reaction, by catalyzing a one-codon backward translocation of tRNAs on improperly translocated ribosomes. Back-translocation proceeds from a post-translocation (POST) complex to a pre-translocation (PRE) complex, thus giving elongation factor G a second chance to translocate the tRNAs correctly. Binds to ribosomes in a GTP-dependent manner. The sequence is that of Elongation factor 4 from Nitrosomonas eutropha (strain DSM 101675 / C91 / Nm57).